The following is a 989-amino-acid chain: SWI/SNF-related matrix-associated actin-dependent regulator of chromatin subfamily A containing DEAD/H box 1 homolog (989 aa).

The interval 1–288 is disordered; it reads MSTTSDFQTG…RRAKRGETKN (288 aa). The segment covering 72–105 has biased composition (acidic residues); it reads DDDDEDYVDETMPSEDEEDFDNNEEDEDDDDYEE. The span at 109-120 shows a compositional bias: basic residues; it reads RKRKAPSKKKLV. The span at 124–140 shows a compositional bias: basic and acidic residues; it reads ENYRREDSETPEPEMKR. Residues 187-200 show a composition bias toward acidic residues; that stretch reads DDESEDDFINDEEI. 2 stretches are compositionally biased toward basic and acidic residues: residues 201–221 and 241–250; these read SEKG…GKDS and AQKEQKKKAE. The span at 251–276 shows a compositional bias: acidic residues; sequence SDEDWEEDEDDMNADGDETPSDDSDI. Residues 277 to 288 are compositionally biased toward basic and acidic residues; the sequence is EERRAKRGETKN. The Helicase ATP-binding domain maps to 406–574; it reads IMMYNKDLNA…ISLMYFVLSK (169 aa). 419-426 contacts ATP; sequence DEMGLGKT. The short motif at 525 to 528 is the DEGH box element; sequence DEGH. Residues 757–912 enclose the Helicase C-terminal domain; sequence QLDVMLPEIQ…GVKGQLDEDA (156 aa). The interval 941 to 989 is disordered; the sequence is RYDDVEDDSGDSKNGIDAEEAAKKEDEAVKEPVEKEQQKEEESQPSTSA. Residues 950–982 are compositionally biased toward basic and acidic residues; sequence GDSKNGIDAEEAAKKEDEAVKEPVEKEQQKEEE.

It belongs to the SNF2/RAD54 helicase family.

The protein resides in the nucleus. Its subcellular location is the chromosome. It catalyses the reaction ATP + H2O = ADP + phosphate + H(+). Its function is as follows. DNA helicase that possesses intrinsic ATP-dependent nucleosome-remodeling activity and is both required for DNA repair and heterochromatin organization. Promotes DNA end resection of double-strand breaks (DSBs) following DNA damage: probably acts by weakening histone DNA interactions in nucleosomes flanking DSBs. The sequence is that of SWI/SNF-related matrix-associated actin-dependent regulator of chromatin subfamily A containing DEAD/H box 1 homolog from Caenorhabditis elegans.